Here is a 221-residue protein sequence, read N- to C-terminus: Large ribosomal subunit protein uL3 (221 aa).

This sequence belongs to the universal ribosomal protein uL3 family. As to quaternary structure, part of the 50S ribosomal subunit. Forms a cluster with proteins L14 and L19.

Its function is as follows. One of the primary rRNA binding proteins, it binds directly near the 3'-end of the 23S rRNA, where it nucleates assembly of the 50S subunit. This is Large ribosomal subunit protein uL3 from Chlamydia abortus (strain DSM 27085 / S26/3) (Chlamydophila abortus).